We begin with the raw amino-acid sequence, 166 residues long: Endoribonuclease YbeY (166 aa).

3 residues coordinate Zn(2+): H132, H136, and H142.

This sequence belongs to the endoribonuclease YbeY family. Zn(2+) is required as a cofactor.

It localises to the cytoplasm. Its function is as follows. Single strand-specific metallo-endoribonuclease involved in late-stage 70S ribosome quality control and in maturation of the 3' terminus of the 16S rRNA. This Clostridium botulinum (strain Langeland / NCTC 10281 / Type F) protein is Endoribonuclease YbeY.